The following is a 233-amino-acid chain: Large ribosomal subunit protein uL1 (233 aa).

This sequence belongs to the universal ribosomal protein uL1 family. As to quaternary structure, part of the 50S ribosomal subunit.

In terms of biological role, binds directly to 23S rRNA. The L1 stalk is quite mobile in the ribosome, and is involved in E site tRNA release. Protein L1 is also a translational repressor protein, it controls the translation of the L11 operon by binding to its mRNA. The sequence is that of Large ribosomal subunit protein uL1 from Shewanella oneidensis (strain ATCC 700550 / JCM 31522 / CIP 106686 / LMG 19005 / NCIMB 14063 / MR-1).